Here is a 91-residue protein sequence, read N- to C-terminus: Non-specific lipid-transfer protein 1 (91 aa).

4 cysteine pairs are disulfide-bonded: Cys3-Cys50, Cys13-Cys27, Cys28-Cys73, and Cys48-Cys87. Positions 44 and 79 each coordinate a 1,2-diacyl-sn-glycero-3-phosphocholine.

As to quaternary structure, monomer.

Functionally, plant non-specific lipid-transfer proteins transfer phospholipids as well as galactolipids across membranes. May play a role in wax or cutin deposition in the cell walls of expanding epidermal cells and certain secretory tissues. Has antifungal activity against F.solani, F.oxysporum, P.aphanidermatum and S.rolfsii. Has antibacterial activity against the Gram-positive bacterium S.aureus but not against the Gram-negative bacterium S.typhimurium. The sequence is that of Non-specific lipid-transfer protein 1 from Vigna radiata var. radiata (Mung bean).